The following is a 138-amino-acid chain: Integration host factor subunit beta (138 aa).

Basic and acidic residues predominate over residues 81–98 (KAGKELRERVDRSLERQG). The segment at 81–138 (KAGKELRERVDRSLERQGDSSSEGEPVSLTAVKAARQAGGHHAAGFPAEATPTLVMSR) is disordered.

This sequence belongs to the bacterial histone-like protein family. Heterodimer of an alpha and a beta chain.

In terms of biological role, this protein is one of the two subunits of integration host factor, a specific DNA-binding protein that functions in genetic recombination as well as in transcriptional and translational control. The chain is Integration host factor subunit beta from Ralstonia nicotianae (strain ATCC BAA-1114 / GMI1000) (Ralstonia solanacearum).